An 84-amino-acid chain; its full sequence is Cell division topological specificity factor (84 aa).

This sequence belongs to the MinE family.

In terms of biological role, prevents the cell division inhibition by proteins MinC and MinD at internal division sites while permitting inhibition at polar sites. This ensures cell division at the proper site by restricting the formation of a division septum at the midpoint of the long axis of the cell. The protein is Cell division topological specificity factor of Burkholderia cenocepacia (strain ATCC BAA-245 / DSM 16553 / LMG 16656 / NCTC 13227 / J2315 / CF5610) (Burkholderia cepacia (strain J2315)).